A 223-amino-acid polypeptide reads, in one-letter code: MKKIQIALDGPAGAGKSTIAKQLASHLDYVYIDTGAMYRAVTLAALEQGLDLENGPVLGELMKSLDIRLTPGEQGQRVFIGEREVTDAIRTNEVTNNVSFVARQAEVRSALVIAQRKLAERGGIVMDGRDIGTVVLPEAELKVFLTASVEERASRRHRENIARGMDSDLKGLQDEIALRDKRDSERTVSPLKQADDAIYLDTTELNIDQVVARLTELAEGALK.

10 to 18 (GPAGAGKST) contacts ATP.

It belongs to the cytidylate kinase family. Type 1 subfamily.

It is found in the cytoplasm. The enzyme catalyses CMP + ATP = CDP + ADP. It catalyses the reaction dCMP + ATP = dCDP + ADP. This Exiguobacterium sibiricum (strain DSM 17290 / CCUG 55495 / CIP 109462 / JCM 13490 / 255-15) protein is Cytidylate kinase.